The following is a 601-amino-acid chain: Arginine--tRNA ligase (601 aa).

A 'HIGH' region motif is present at residues 135–145 (ANPTGPLHLGH).

It belongs to the class-I aminoacyl-tRNA synthetase family. In terms of assembly, monomer.

Its subcellular location is the cytoplasm. It catalyses the reaction tRNA(Arg) + L-arginine + ATP = L-arginyl-tRNA(Arg) + AMP + diphosphate. The polypeptide is Arginine--tRNA ligase (Gloeobacter violaceus (strain ATCC 29082 / PCC 7421)).